A 69-amino-acid polypeptide reads, in one-letter code: U-scoloptoxin(21)-Sm2a (69 aa).

The first 21 residues, 1–21 (MFFLGFIIVCASEEQSDNRLP), serve as a signal peptide directing secretion. Residues 46–69 (ANDPNGPGRRRRSPIVREEILRHP) are disordered. Over residues 60–69 (IVREEILRHP) the composition is skewed to basic and acidic residues.

It belongs to the scoloptoxin-21 family. In terms of tissue distribution, expressed by the venom gland.

The protein localises to the secreted. The sequence is that of U-scoloptoxin(21)-Sm2a from Scolopendra morsitans (Tanzanian blue ringleg centipede).